We begin with the raw amino-acid sequence, 135 residues long: MSKLNKTILADFEAAQIQRQLPEFNQGDTVVVNVKVKEGNRERVQAYEGVVIGTKNAGLNSAFTVRKISHGFGVERVFQTHSAIIDSVEVKRRGKVRAGKLYYLRGLEGKAARIKEDLAAAAQAKAARQAAAKAE.

The protein belongs to the bacterial ribosomal protein bL19 family.

Functionally, this protein is located at the 30S-50S ribosomal subunit interface and may play a role in the structure and function of the aminoacyl-tRNA binding site. This Xanthomonas campestris pv. campestris (strain 8004) protein is Large ribosomal subunit protein bL19.